We begin with the raw amino-acid sequence, 622 residues long: Auxin response factor 11 (622 aa).

A DNA-binding region (TF-B3) is located at residues 145–247 (FVKILTASDT…DLRVGVRRLA (103 aa)). Disordered regions lie at residues 358 to 398 (SIQR…ISEI) and 483 to 513 (SNIS…TRSR). 2 stretches are compositionally biased toward polar residues: residues 376 to 387 (SALTPTPTQQQS) and 483 to 511 (SNIS…TSTR). In terms of domain architecture, PB1 spans 511 to 594 (RSRIKVQMQG…KKLFIYPSDE (84 aa)).

Belongs to the ARF family. In terms of assembly, homodimers and heterodimers.

It localises to the nucleus. In terms of biological role, auxin response factors (ARFs) are transcriptional factors that bind specifically to the DNA sequence 5'-TGTCTC-3' found in the auxin-responsive promoter elements (AuxREs). Could act as transcriptional activator or repressor. Formation of heterodimers with Aux/IAA proteins may alter their ability to modulate early auxin response genes expression. This is Auxin response factor 11 (ARF11) from Arabidopsis thaliana (Mouse-ear cress).